A 403-amino-acid polypeptide reads, in one-letter code: F-box/kelch-repeat protein At5g43190 (403 aa).

An F-box domain is found at 45-91 (PNIWSNLPNHLLEHILSLLPFKTLLTLRSISRHLRSLILSPSFISDH). Kelch repeat units lie at residues 91-140 (HSFS…LLSS), 192-240 (KIFT…VFYN), 291-339 (ILYM…VCYH), and 343-393 (HVYC…FRWF).

The sequence is that of F-box/kelch-repeat protein At5g43190 from Arabidopsis thaliana (Mouse-ear cress).